The sequence spans 54 residues: Large ribosomal subunit protein bL32c (54 aa).

The protein belongs to the bacterial ribosomal protein bL32 family.

It is found in the plastid. Its subcellular location is the chloroplast. In Lactuca sativa (Garden lettuce), this protein is Large ribosomal subunit protein bL32c.